Reading from the N-terminus, the 61-residue chain is Sperm protamine P1 (61 aa).

The interval 1-61 (MARYRHSRSR…RRYHSHRRRY (61 aa)) is disordered.

Belongs to the protamine P1 family. Testis.

Its subcellular location is the nucleus. It localises to the chromosome. Functionally, protamines substitute for histones in the chromatin of sperm during the haploid phase of spermatogenesis. They compact sperm DNA into a highly condensed, stable and inactive complex. In Notoryctes typhlops (Southern marsupial mole), this protein is Sperm protamine P1 (PRM1).